A 409-amino-acid chain; its full sequence is uncharacterized protein (409 aa).

The region spanning 3 to 162 is the N-acetyltransferase domain; that stretch reads TDVRVLRQDD…DDVRLRYAVP (160 aa). Acetyl-CoA-binding positions include 82–84, 90–95, and 118–119; these read VSV, RRGVLT, and SE. Tyr-123 acts as the Proton donor in catalysis. Residue Phe-409 is the Proton acceptor; via carboxylate of the active site.

Belongs to the acetyltransferase Eis family. As to quaternary structure, homohexamer; trimer of dimers.

This is an uncharacterized protein from Streptomyces avermitilis (strain ATCC 31267 / DSM 46492 / JCM 5070 / NBRC 14893 / NCIMB 12804 / NRRL 8165 / MA-4680).